We begin with the raw amino-acid sequence, 199 residues long: MSEPIQRKLILGSTSPYRRELLARLRIPFEVAAPDVDESARAGETPQQLACRLAMAKARAVAAQFPSCVVVGSDQVAELDGQALGKPGNHARAVAQLQQMRGKSVIFQTAVAVVCVETGFAQMDLAQVKVNFRQLSDAEIEAYLRAETPYDCAGSAKSEGLGIALLDSIDNDDPTALVGLPMIRTCRMIQAAGIKVLGA.

The Proton acceptor role is filled by aspartate 74.

It belongs to the Maf family. YceF subfamily. It depends on a divalent metal cation as a cofactor.

The protein resides in the cytoplasm. The catalysed reaction is N(7)-methyl-GTP + H2O = N(7)-methyl-GMP + diphosphate + H(+). Its function is as follows. Nucleoside triphosphate pyrophosphatase that hydrolyzes 7-methyl-GTP (m(7)GTP). May have a dual role in cell division arrest and in preventing the incorporation of modified nucleotides into cellular nucleic acids. The protein is 7-methyl-GTP pyrophosphatase of Albidiferax ferrireducens (strain ATCC BAA-621 / DSM 15236 / T118) (Rhodoferax ferrireducens).